A 126-amino-acid chain; its full sequence is Large ribosomal subunit protein bL12 (126 aa).

Belongs to the bacterial ribosomal protein bL12 family. Homodimer. Part of the ribosomal stalk of the 50S ribosomal subunit. Forms a multimeric L10(L12)X complex, where L10 forms an elongated spine to which 2 to 4 L12 dimers bind in a sequential fashion. Binds GTP-bound translation factors.

Forms part of the ribosomal stalk which helps the ribosome interact with GTP-bound translation factors. Is thus essential for accurate translation. The polypeptide is Large ribosomal subunit protein bL12 (Methylobacterium nodulans (strain LMG 21967 / CNCM I-2342 / ORS 2060)).